Reading from the N-terminus, the 491-residue chain is Cytochrome P450 2F2 (491 aa).

Residue Cys436 coordinates heme.

This sequence belongs to the cytochrome P450 family. Heme is required as a cofactor. Club cells in lung and liver.

Its subcellular location is the endoplasmic reticulum membrane. The protein localises to the microsome membrane. In terms of biological role, involved in the regio- and stereoselective transformation of naphthalene to trans-1R-hydroxy-2R-glutathionyl-1,2-dihydronaphthalene in the presence of glutathione and glutathione S-transferases. It specifically catalyzes the production of a very reactive and potentially toxic intermediate, the 2R,2S arene oxide, that is associated with necrosis of the unciliated bronchiolar epithelial cells or club cells in lung. The protein is Cytochrome P450 2F2 (Cyp2f2) of Mus musculus (Mouse).